The chain runs to 143 residues: Peptide methionine sulfoxide reductase MsrB (143 aa).

The MsrB domain maps to 16-139 (DAELRRRLTP…NSAALNFEAK (124 aa)). 4 residues coordinate Zn(2+): Cys55, Cys58, Cys104, and Cys107. Cys128 acts as the Nucleophile in catalysis.

It belongs to the MsrB Met sulfoxide reductase family. Zn(2+) serves as cofactor.

The catalysed reaction is L-methionyl-[protein] + [thioredoxin]-disulfide + H2O = L-methionyl-(R)-S-oxide-[protein] + [thioredoxin]-dithiol. The polypeptide is Peptide methionine sulfoxide reductase MsrB (Burkholderia pseudomallei (strain 1710b)).